The primary structure comprises 85 residues: RNA-binding protein Hfq (85 aa).

Residues 9–69 (DQLLNTARKD…ISTIIPAKII (61 aa)) form the Sm domain.

The protein belongs to the Hfq family. As to quaternary structure, homohexamer.

Its function is as follows. RNA chaperone that binds small regulatory RNA (sRNAs) and mRNAs to facilitate mRNA translational regulation in response to envelope stress, environmental stress and changes in metabolite concentrations. Also binds with high specificity to tRNAs. In Leptospira interrogans serogroup Icterohaemorrhagiae serovar copenhageni (strain Fiocruz L1-130), this protein is RNA-binding protein Hfq.